The chain runs to 373 residues: UDP-3-O-acylglucosamine N-acyltransferase 2 (373 aa).

H257 acts as the Proton acceptor in catalysis. Positions 346–373 (DGRTAASAEAAAPSSDATGVDQPDQAAS) are disordered. The segment covering 350–362 (AASAEAAAPSSDA) has biased composition (low complexity).

This sequence belongs to the transferase hexapeptide repeat family. LpxD subfamily. As to quaternary structure, homotrimer.

It catalyses the reaction a UDP-3-O-[(3R)-3-hydroxyacyl]-alpha-D-glucosamine + a (3R)-hydroxyacyl-[ACP] = a UDP-2-N,3-O-bis[(3R)-3-hydroxyacyl]-alpha-D-glucosamine + holo-[ACP] + H(+). The protein operates within bacterial outer membrane biogenesis; LPS lipid A biosynthesis. Its function is as follows. Catalyzes the N-acylation of UDP-3-O-acylglucosamine using 3-hydroxyacyl-ACP as the acyl donor. Is involved in the biosynthesis of lipid A, a phosphorylated glycolipid that anchors the lipopolysaccharide to the outer membrane of the cell. The polypeptide is UDP-3-O-acylglucosamine N-acyltransferase 2 (Rhodopseudomonas palustris (strain BisB18)).